The chain runs to 102 residues: MKKVLALVVAAAMGLSSAAFAAETATTPAPTATTTKAAPAKTTHHKKQHKAAPAQKAQAAKKHHKNTKAEQKAPEQKAQAAKKHAGKHSHQQPAKPAAQPAA.

Positions 1–21 are cleaved as a signal peptide; it reads MKKVLALVVAAAMGLSSAAFA. Positions 22–41 are enriched in low complexity; sequence AETATTPAPTATTTKAAPAK. Residues 22 to 58 constitute a propeptide that is removed on maturation; that stretch reads AETATTPAPTATTTKAAPAKTTHHKKQHKAAPAQKAQ. Positions 22–102 are disordered; that stretch reads AETATTPAPT…PAKPAAQPAA (81 aa). The span at 80–90 shows a compositional bias: basic residues; that stretch reads AAKKHAGKHSH. A compositionally biased stretch (low complexity) spans 91–102; sequence QQPAKPAAQPAA.

Belongs to the Asr family. In terms of processing, proteolytic processing gives rise to the active protein.

The protein resides in the periplasm. Functionally, required for growth and/or survival at acidic conditions. The polypeptide is Acid shock protein (Escherichia coli (strain 55989 / EAEC)).